The following is a 342-amino-acid chain: Methionine import ATP-binding protein MetN 2 (342 aa).

The ABC transporter domain occupies 2–241 (ISIEGLSKVF…PKQLVTRKFV (240 aa)). Residue 38–45 (GYSGAGKS) coordinates ATP.

It belongs to the ABC transporter superfamily. Methionine importer (TC 3.A.1.24) family. The complex is composed of two ATP-binding proteins (MetN), two transmembrane proteins (MetI) and a solute-binding protein (MetQ).

Its subcellular location is the cell membrane. It carries out the reaction L-methionine(out) + ATP + H2O = L-methionine(in) + ADP + phosphate + H(+). It catalyses the reaction D-methionine(out) + ATP + H2O = D-methionine(in) + ADP + phosphate + H(+). Functionally, part of the ABC transporter complex MetNIQ involved in methionine import. Responsible for energy coupling to the transport system. This chain is Methionine import ATP-binding protein MetN 2, found in Oceanobacillus iheyensis (strain DSM 14371 / CIP 107618 / JCM 11309 / KCTC 3954 / HTE831).